The sequence spans 1015 residues: DNA ligase 3 (1015 aa).

The PARP-type zinc finger occupies 94–186 (FCVDYAKRGT…QISQHIADLS (93 aa)). Zn(2+)-binding residues include C106, C109, H140, and C143. Phosphoserine is present on residues S211, S217, S228, and S244. A disordered region spans residues 229–255 (GFSAAKPNNSEQAPSSPAPGTSLSASK). The span at 234-253 (KPNNSEQAPSSPAPGTSLSA) shows a compositional bias: polar residues. Interaction with DNA regions lie at residues 279 to 282 (PSYN), 323 to 328 (VYNLND), 393 to 396 (TKED), and 426 to 432 (KMNSGAK). E511 lines the ATP pocket. The N6-AMP-lysine intermediate role is filled by K513. ATP contacts are provided by R518 and R533. Mg(2+)-binding residues include E565 and E660. ATP is bound by residues K665, R676, and K680. Residues 849-926 (DEASPTTGGS…KSSPVKVGMK (78 aa)) form a disordered region. Low complexity predominate over residues 854-884 (TTGGSSGENEGTAGSAGPCKGPPSKSSASAK). At S919 the chain carries Phosphoserine. A BRCT domain is found at 939-1015 (VLLDVFTGVR…IRKRRLIAPC (77 aa)).

It belongs to the ATP-dependent DNA ligase family. Isoform 3 interacts (via BRCT domain) with the nuclear DNA-repair protein XRCC1. Interacts with POLG. Interacts with POLB. Requires Mg(2+) as cofactor. As to expression, the alpha isoform is expressed in all tissues, while the beta isoform is expressed only in the testis.

It localises to the nucleus. It carries out the reaction ATP + (deoxyribonucleotide)n-3'-hydroxyl + 5'-phospho-(deoxyribonucleotide)m = (deoxyribonucleotide)n+m + AMP + diphosphate.. The alpha isoform interacts with DNA-repair protein XRCC1 and can correct defective DNA strand-break repair and sister chromatid exchange following treatment with ionizing radiation and alkylating agents. The beta isoform does not interact with XRCC1 and may be specifically involved in the completion of homologous recombination events that occur during meiotic prophase. This Mus musculus (Mouse) protein is DNA ligase 3 (Lig3).